Consider the following 575-residue polypeptide: Phosphoenolpyruvate-protein phosphotransferase (575 aa).

The active-site Tele-phosphohistidine intermediate is the His-191. 2 residues coordinate phosphoenolpyruvate: Arg-298 and Arg-334. Mg(2+)-binding residues include Glu-435 and Asp-459. Residues 458-459 (ND) and Arg-469 each bind phosphoenolpyruvate. The active-site Proton donor is Cys-506.

It belongs to the PEP-utilizing enzyme family. In terms of assembly, homodimer. Mg(2+) serves as cofactor.

It localises to the cytoplasm. It catalyses the reaction L-histidyl-[protein] + phosphoenolpyruvate = N(pros)-phospho-L-histidyl-[protein] + pyruvate. Its function is as follows. General (non sugar-specific) component of the phosphoenolpyruvate-dependent sugar phosphotransferase system (sugar PTS). This major carbohydrate active-transport system catalyzes the phosphorylation of incoming sugar substrates concomitantly with their translocation across the cell membrane. Enzyme I transfers the phosphoryl group from phosphoenolpyruvate (PEP) to the phosphoryl carrier protein (HPr). The chain is Phosphoenolpyruvate-protein phosphotransferase (ptsI) from Lactococcus lactis subsp. cremoris (Streptococcus cremoris).